Here is a 304-residue protein sequence, read N- to C-terminus: Glutaminase (304 aa).

Residues Ser-63, Asn-114, Glu-158, Asn-165, Tyr-189, Tyr-240, and Val-258 each coordinate substrate.

It belongs to the glutaminase family. As to quaternary structure, homotetramer.

The enzyme catalyses L-glutamine + H2O = L-glutamate + NH4(+). The sequence is that of Glutaminase from Shewanella oneidensis (strain ATCC 700550 / JCM 31522 / CIP 106686 / LMG 19005 / NCIMB 14063 / MR-1).